We begin with the raw amino-acid sequence, 373 residues long: MRSGILSKVKRIVIKIGSGVLTCGDNGLNKPLMGSIAAQVAELRASGRQVIIVSSGAVAAGRKELGIDGRPRSIPQKQAAAAIGQSRLMHAYEEAFEPFGHKVAQILLTRDDLAHRGRFLNARATLDTLLSFGVIPIINENDTVVFDEIKFGDNDSLSALVTNLAEANLLVILTDIDGFYEANPRTNPDARLIPLVRQITREMERAAGGSGSTVGTGGMVTKLAAAKKAGQFGVPTLMLNGRNPSLLAEAFAGREVGTLFLPGKESLNRRKHWIAHTLRPSGKIIVDDGARTVLARQGKSLLPSGVVRVEGKFDRGACVRVCGTDGTEIARGLVDYSHDEITRILGHRSGEIEAILGYKYGDEIIHRDNLVVL.

Lys-15 serves as a coordination point for ATP. Substrate is bound by residues Ser-55, Asp-142, and Asn-154. Residues Thr-174–Asp-175 and Thr-216–Lys-222 each bind ATP. Residues Ser-281–Lys-359 form the PUA domain.

It belongs to the glutamate 5-kinase family.

The protein localises to the cytoplasm. It carries out the reaction L-glutamate + ATP = L-glutamyl 5-phosphate + ADP. Its pathway is amino-acid biosynthesis; L-proline biosynthesis; L-glutamate 5-semialdehyde from L-glutamate: step 1/2. Functionally, catalyzes the transfer of a phosphate group to glutamate to form L-glutamate 5-phosphate. This Geobacter sulfurreducens (strain ATCC 51573 / DSM 12127 / PCA) protein is Glutamate 5-kinase.